Here is a 258-residue protein sequence, read N- to C-terminus: 2-succinyl-6-hydroxy-2,4-cyclohexadiene-1-carboxylate synthase (258 aa).

It belongs to the AB hydrolase superfamily. MenH family. In terms of assembly, monomer.

The catalysed reaction is 5-enolpyruvoyl-6-hydroxy-2-succinyl-cyclohex-3-ene-1-carboxylate = (1R,6R)-6-hydroxy-2-succinyl-cyclohexa-2,4-diene-1-carboxylate + pyruvate. Its pathway is quinol/quinone metabolism; 1,4-dihydroxy-2-naphthoate biosynthesis; 1,4-dihydroxy-2-naphthoate from chorismate: step 3/7. The protein operates within quinol/quinone metabolism; menaquinone biosynthesis. In terms of biological role, catalyzes a proton abstraction reaction that results in 2,5-elimination of pyruvate from 2-succinyl-5-enolpyruvyl-6-hydroxy-3-cyclohexene-1-carboxylate (SEPHCHC) and the formation of 2-succinyl-6-hydroxy-2,4-cyclohexadiene-1-carboxylate (SHCHC). In Enterobacter sp. (strain 638), this protein is 2-succinyl-6-hydroxy-2,4-cyclohexadiene-1-carboxylate synthase.